Consider the following 268-residue polypeptide: Bidirectional sugar transporter N3 (268 aa).

The Extracellular portion of the chain corresponds to 1–7 (MAISHNT). Residues 8–28 (LAFTFGMLGNVISFLVFLAPI) form a helical membrane-spanning segment. Residues 10–96 (FTFGMLGNVI…ILYIIYAPRD (87 aa)) form the MtN3/slv 1 domain. At 29–42 (STFYRIYKKKSTEG) the chain is on the cytoplasmic side. Residues 43-63 (FQSLPYLVALFSSMLWLYYAL) form a helical membrane-spanning segment. The Extracellular segment spans residues 64–70 (LKKDAFL). Residues 71–91 (LITINSFGCVVETIYIILYII) traverse the membrane as a helical segment. Over 92–103 (YAPRDARNLTFK) the chain is Cytoplasmic. A helical membrane pass occupies residues 104–124 (LLSAMNVGSFALILIVTNYAV). At 125-131 (HGPLRVQ) the chain is on the extracellular side. Positions 131–214 (QVLGWVCVSL…QMLLYAIYRN (84 aa)) constitute a MtN3/slv 2 domain. Residues 132-152 (VLGWVCVSLSVSVFAAPLSIV) traverse the membrane as a helical segment. The Cytoplasmic portion of the chain corresponds to 153-165 (AQVVRTKSVEFMP). The chain crosses the membrane as a helical span at residues 166–186 (FNLSFTLTLSATMWFGYGFFL). The Extracellular segment spans residues 187–190 (KDIC). The helical transmembrane segment at 191–211 (IXLPNVLGXVLGLLQMLLYAI) threads the bilayer. The Cytoplasmic segment spans residues 212–268 (YRNGGEKAMKKEKKAPIEPPKSIVIETQLEKIEQEKKNKDDDNEEKDKSEEPIGCGV). Residues 234–262 (IVIETQLEKIEQEKKNKDDDNEEKDKSEE) adopt a coiled-coil conformation. The span at 243–262 (IEQEKKNKDDDNEEKDKSEE) shows a compositional bias: basic and acidic residues. Residues 243-268 (IEQEKKNKDDDNEEKDKSEEPIGCGV) form a disordered region.

The protein belongs to the SWEET sugar transporter family. Forms homooligomers and/or heterooligomers.

The protein localises to the cell membrane. Functionally, mediates both low-affinity uptake and efflux of sugar across the plasma membrane. The polypeptide is Bidirectional sugar transporter N3 (N3) (Medicago truncatula (Barrel medic)).